The following is a 301-amino-acid chain: uncharacterized protein (301 aa).

Residues 16 to 28 show a composition bias toward basic and acidic residues; the sequence is EITEESEKTKTDL. The disordered stretch occupies residues 16 to 38; it reads EITEESEKTKTDLQKANTPNKTE. Polar residues predominate over residues 29–38; the sequence is QKANTPNKTE. The region spanning 252–301 is the G-patch domain; sequence KENVALKMLQRCGWKEGQGLGQHNQGIINPLHVEISGFVTETKHSKINDK.

This is an uncharacterized protein from Schizosaccharomyces pombe (strain 972 / ATCC 24843) (Fission yeast).